An 892-amino-acid polypeptide reads, in one-letter code: MGGRAGLDDGRGAEGVVRRGSRVAEGAAGAAAWGDDADEAGGLGAGSSEPAAVGQPARDAEHRAASGAGLFGWTVPPGERVSELDRLRRGPVRVSGPQMKRALERAEEIAAFGMGAVDVSRIPPRRLAELSRYGVDGKASLLRRHSDARRLATLLATTVYLTSRAVDDALDLLEVLIATKLLARAERESAKEKLKSLPRVERASAKLATAFQVVFDTTSEQVDTDTGEIPPPKVESLEGMWAAIEQVVPRHELAAAIAALFELTPPLDSDADEAWRAMLINRFGTVRPFLKLLVSVVDFDATPEGEAVLGALLSLPELMGRKKVGPAEIDADLLTGSWRRLVLAAPHLEPGTVDWKAYTFCVLEHLHRMLRSKQVFAKNSSKWGDPRAKLLAGQAWQQARPTVLASLNLPGEADGHLAARAALLDGTYREVAARVPDSAQIVFDDDGRLHFAALEPEPEPASLLELRAAVNAMLPRVDLPEVLLEVFSWTGADQAFTSVTAGEARLKDLNVTIAALLVAHGCNVGYTPVMGGADPLKYGRLSHVDQTYLRLATYRAANATLIEHQASIPLAQTWGGGLVASVDGMRFVVPVPSVYARPNPKYFGRRGGATWLNMINDQAAGLGGKVVAGTPRDSLYVLDVLYDRDGGKRPEMIVTDTASYSDIVFGLLTLAGFAYAPQLADLPDQKMWRVDRTADYGAFQDAARGRIDLARIERHWEDILRIIGSIHTGAVRAYDVIRMLSRDGRPTPLGDAIAHYGRIAKTLHILRLADEPGYRRQIKVQANLQEGRHALARKIFHGKQGQLYQRYQDGMEDQIGALGLVLNALVLFNTRYMDAAVNQLRADGFDVRDEDVARLSPFVRHHINMLGRYSFQLPDLPGGLRPLRDKTATDDM.

The span at 1–12 shows a compositional bias: basic and acidic residues; sequence MGGRAGLDDGRG. The segment at 1 to 63 is disordered; that stretch reads MGGRAGLDDG…GQPARDAEHR (63 aa). The segment covering 23–34 has biased composition (low complexity); it reads VAEGAAGAAAWG.

It belongs to the transposase 7 family.

In terms of biological role, required for transposition of transposon Tn4556. This chain is Transposase for transposon Tn4556 (tnpA), found in Streptomyces fradiae (Streptomyces roseoflavus).